The primary structure comprises 1035 residues: Protein hir-1 (1035 aa).

WD repeat units follow at residues 15-54, 68-107, 129-168, 171-210, 232-275, 299-338, and 342-383; these read QKDFEVYSCHVSPDGKRLATAGGDGHVRVWSVEAIFNSHD, HHLGTIHSVRFSPNGRYLASGADDKIICIYHLDSNPPSHT, GHDNDVQDLAWSPDNSLLVSVGLDSKIVVWSGHTFEKLKT, VHQSHVKGITFDPANKFFATASDDRTIKIFRYTAPAPNAT, PLTT…SEIN, DENSNANGAASPGLVTVIASAGQDKTLTIWNTNTSRPVLI, and IASK…WVAK. Positions 393-479 are disordered; it reads KYGGSRKGMG…PEEESADKTA (87 aa). Basic and acidic residues predominate over residues 408–425; sequence DGLHLENHSKEKELRGAE.

It belongs to the WD repeat HIR1 family.

It is found in the nucleus. Functionally, required for replication-independent chromatin assembly and for the periodic repression of histone gene transcription during the cell cycle. This is Protein hir-1 (hir-1) from Neurospora crassa (strain ATCC 24698 / 74-OR23-1A / CBS 708.71 / DSM 1257 / FGSC 987).